Here is a 496-residue protein sequence, read N- to C-terminus: Cytochrome P450 71A15 (496 aa).

The helical transmembrane segment at 3–23 threads the bilayer; it reads IIIISLCLATILAFLLLKPLL. Residue Cys439 participates in heme binding.

Belongs to the cytochrome P450 family. It depends on heme as a cofactor.

The protein resides in the membrane. This is Cytochrome P450 71A15 (CYP71A15) from Arabidopsis thaliana (Mouse-ear cress).